A 309-amino-acid chain; its full sequence is Malate dehydrogenase (309 aa).

NAD(+)-binding positions include 9–14 (GAGFVG) and Asp33. Substrate is bound by residues Arg82 and Arg88. Residues Asn95 and 118-120 (VNN) contribute to the NAD(+) site. Substrate-binding residues include Asn120 and Arg151. The Proton acceptor role is filled by His175.

This sequence belongs to the LDH/MDH superfamily. MDH type 3 family.

The enzyme catalyses (S)-malate + NAD(+) = oxaloacetate + NADH + H(+). Functionally, catalyzes the reversible oxidation of malate to oxaloacetate. In Roseiflexus castenholzii (strain DSM 13941 / HLO8), this protein is Malate dehydrogenase.